We begin with the raw amino-acid sequence, 576 residues long: MRASQFLFATLKETPSDADIVSSQLMLRAGLIRKLASGLYVWLPMGLKVLQKVEKIVREEMQNIGGQEVLMPMTQPAELWQESGRFEDYGPELLRFTDRHNRDFVLGPTHEEVITDLARGELRSYKQLPVTFFQIQGKFRDEIRPRFGIMRAREFTMKDAYSFHVDQASLEVTYQQMYDAYTRIFQRLGLNFRAVLADTGSIGGSASHEFHVLAGSGEDAIAFSDGSDYAANVELAEAICTDERAAPTQDKQNVSTPKIQTNEELAKFLDIPLHTTVKTLVVKGHRINEDGSEGDEQLVALVVRGDHTLNEIKAEKIAEVATPLTFATEEEMKAAGLKKGFIGVDLDMPVYVDRAAAALSDFVSGANEYDMHTTGMNWERDATITDVVDIRNVVEGDASPDGKGTLSIKRGIEVGHIFQLGDKYSKALNCTVMGEDGKPVTLMMGCYGIGVSRIIAAAIEQNHDDNGIIWAKTPDIKDSIAPFDIAIVPMKSKEDTVMQTAEALYEELKARGLNVILDDRNERPGVKFADLELIGIPHRIVVSDRNLAEDKYEYVDRRDGEKQLLSREELLAKVSL.

The protein belongs to the class-II aminoacyl-tRNA synthetase family. ProS type 1 subfamily. As to quaternary structure, homodimer.

It localises to the cytoplasm. The catalysed reaction is tRNA(Pro) + L-proline + ATP = L-prolyl-tRNA(Pro) + AMP + diphosphate. In terms of biological role, catalyzes the attachment of proline to tRNA(Pro) in a two-step reaction: proline is first activated by ATP to form Pro-AMP and then transferred to the acceptor end of tRNA(Pro). As ProRS can inadvertently accommodate and process non-cognate amino acids such as alanine and cysteine, to avoid such errors it has two additional distinct editing activities against alanine. One activity is designated as 'pretransfer' editing and involves the tRNA(Pro)-independent hydrolysis of activated Ala-AMP. The other activity is designated 'posttransfer' editing and involves deacylation of mischarged Ala-tRNA(Pro). The misacylated Cys-tRNA(Pro) is not edited by ProRS. The chain is Proline--tRNA ligase from Psychrobacter sp. (strain PRwf-1).